The chain runs to 31 residues: Toxin BmKK16 (31 aa).

Glutamine 1 is modified (pyrrolidone carboxylic acid). Disulfide bonds link cysteine 4–cysteine 20, cysteine 10–cysteine 25, and cysteine 14–cysteine 27. At proline 31 the chain carries Proline amide.

This sequence belongs to the short scorpion toxin superfamily. Potassium channel inhibitor family. Alpha-KTx 17 subfamily. Post-translationally, the N-terminus is blocked. In terms of tissue distribution, expressed by the venom gland.

It is found in the secreted. Blocker of potassium channels (Kv). The protein is Toxin BmKK16 of Olivierus martensii (Manchurian scorpion).